The primary structure comprises 391 residues: Succinate--CoA ligase [ADP-forming] subunit beta (391 aa).

One can recognise an ATP-grasp domain in the interval 9 to 245 (KQIFAEYGVP…LSEEDPDEVE (237 aa)). ATP contacts are provided by residues K46, 53–55 (GRG), E99, A102, and E107. Residues N200 and D214 each coordinate Mg(2+). Substrate contacts are provided by residues N265 and 322–324 (GIV).

It belongs to the succinate/malate CoA ligase beta subunit family. Heterotetramer of two alpha and two beta subunits. The cofactor is Mg(2+).

The enzyme catalyses succinate + ATP + CoA = succinyl-CoA + ADP + phosphate. The catalysed reaction is GTP + succinate + CoA = succinyl-CoA + GDP + phosphate. Its pathway is carbohydrate metabolism; tricarboxylic acid cycle; succinate from succinyl-CoA (ligase route): step 1/1. In terms of biological role, succinyl-CoA synthetase functions in the citric acid cycle (TCA), coupling the hydrolysis of succinyl-CoA to the synthesis of either ATP or GTP and thus represents the only step of substrate-level phosphorylation in the TCA. The beta subunit provides nucleotide specificity of the enzyme and binds the substrate succinate, while the binding sites for coenzyme A and phosphate are found in the alpha subunit. The protein is Succinate--CoA ligase [ADP-forming] subunit beta of Sulfurovum sp. (strain NBC37-1).